Consider the following 215-residue polypeptide: Fibroblast growth factor 10 (215 aa).

The N-terminal stretch at 1-36 (MWKWILTHCASAFPHLPGCCCCFLLLFLVSSVPVTC) is a signal peptide. Residues 49-73 (TNSSSSSSSSSSSSSFSSPSSAGRH) form a disordered region. Asn-50 carries an N-linked (GlcNAc...) asparagine glycan. Residues 51–69 (SSSSSSSSSSSSSFSSPSS) are compositionally biased toward low complexity. Asn-203 carries an N-linked (GlcNAc...) asparagine glycan.

It belongs to the heparin-binding growth factors family. As to quaternary structure, interacts with FGFR1 and FGFR2. Interacts with FGFBP1. As to expression, preferentially expressed in the lung in adults.

It is found in the secreted. Its function is as follows. Plays an important role in the regulation of embryonic development, cell proliferation and cell differentiation. Required for normal branching morphogenesis. May play a role in wound healing. This is Fibroblast growth factor 10 (Fgf10) from Rattus norvegicus (Rat).